Consider the following 92-residue polypeptide: MPRSLKKGPFVDEHLLAKVDAQNEKGNKNVIKTWSRRSTILPDFIGHTFAVHDGRKHVPVFIDDSMVGHKLGEFAPTKTFKGHVKDDKKGRR.

This sequence belongs to the universal ribosomal protein uS19 family.

Functionally, protein S19 forms a complex with S13 that binds strongly to the 16S ribosomal RNA. The polypeptide is Small ribosomal subunit protein uS19 (Corynebacterium jeikeium (strain K411)).